The primary structure comprises 164 residues: Lipocalin-like 1 protein (164 aa).

It belongs to the calycin superfamily. Lipocalin family.

This Homo sapiens (Human) protein is Lipocalin-like 1 protein (LCNL1).